Reading from the N-terminus, the 257-residue chain is MSMLKVSNIQKNFNGNHVLKGIDFEINKGEVVAILGPSGSGKTTFLRCLNLLERPEQGILEFTDGSLKIDFSQKISKADELKLRRRSSMVFQQYNLFPHRSALENVMEGMVVVQKQDKAQAREKALSLLEKVGLKNKADLFPSQLSGGQQQRVGIARALAVKPDIILLDEPTSALDPELVGEVLQTLKMLAQEGWTMIIVTHEMQFAKDVADRVILMADGHIVEQNTADKFFTCPQHERTKQFLLQAKIPLELDYYI.

An ABC transporter domain is found at 4-244; that stretch reads LKVSNIQKNF…PQHERTKQFL (241 aa). 36–43 serves as a coordination point for ATP; the sequence is GPSGSGKT.

Belongs to the ABC transporter superfamily.

It is found in the cell inner membrane. In terms of biological role, probably part of a binding-protein-dependent transport system for an amino acid. Probably responsible for energy coupling to the transport system. This chain is Probable amino-acid ABC transporter ATP-binding protein HI_1078, found in Haemophilus influenzae (strain ATCC 51907 / DSM 11121 / KW20 / Rd).